Reading from the N-terminus, the 148-residue chain is Snaclec convulxin subunit beta (148 aa).

A signal peptide spans 1 to 23 (MGRFIFVSFGLLVVFLSLSGSEA). 3 disulfides stabilise this stretch: Cys27–Cys38, Cys55–Cys144, and Cys121–Cys136. In terms of domain architecture, C-type lectin spans 34 to 148 (YDRYCYKVFK…TYSFVCKFEA (115 aa)).

Belongs to the snaclec family. In terms of assembly, tetramer of heterodimers of alpha and beta subunits (alphabeta)(4); disulfide-linked. In terms of tissue distribution, expressed by the venom gland.

Its subcellular location is the secreted. Functionally, snake venom lectin that activates platelets by binding to the platelet collagen receptor glycoprotein VI (GP6). The indirect activation of integrin alpha-IIb/beta-3 (ITGA2B/ITGB3) also induced by the toxin is upstream the cytoskeletal translocation of GPIb, FcRgamma (FCER1G) and 14-3-3zeta (YWHAZ). This Crotalus durissus terrificus (South American rattlesnake) protein is Snaclec convulxin subunit beta.